Consider the following 739-residue polypeptide: DNA ligase (739 aa).

Residues 1–29 (MTANRPALPTRDKAVSDLSATEASDEHAA) form a disordered region. Residues 51 to 55 (DADYD), 100 to 101 (SL), and Glu134 contribute to the NAD(+) site. Lys136 functions as the N6-AMP-lysine intermediate in the catalytic mechanism. NAD(+) contacts are provided by Arg157, Glu194, Lys311, and Lys335. Cys440, Cys443, Cys464, and Cys470 together coordinate Zn(2+). The interval 592 to 612 (PTEMEEASEETPPTRRRKPQG) is disordered. The BRCT domain maps to 662–739 (ASTSPVSGKT…TEDEWFDLVG (78 aa)).

It belongs to the NAD-dependent DNA ligase family. LigA subfamily. Mg(2+) is required as a cofactor. The cofactor is Mn(2+).

The catalysed reaction is NAD(+) + (deoxyribonucleotide)n-3'-hydroxyl + 5'-phospho-(deoxyribonucleotide)m = (deoxyribonucleotide)n+m + AMP + beta-nicotinamide D-nucleotide.. DNA ligase that catalyzes the formation of phosphodiester linkages between 5'-phosphoryl and 3'-hydroxyl groups in double-stranded DNA using NAD as a coenzyme and as the energy source for the reaction. It is essential for DNA replication and repair of damaged DNA. The sequence is that of DNA ligase from Azorhizobium caulinodans (strain ATCC 43989 / DSM 5975 / JCM 20966 / LMG 6465 / NBRC 14845 / NCIMB 13405 / ORS 571).